A 947-amino-acid chain; its full sequence is Vacuolar membrane protease (947 aa).

Topologically, residues Met1–Lys15 are cytoplasmic. The helical transmembrane segment at Thr16–Asp36 threads the bilayer. Residues Arg37 to Lys358 lie on the Vacuolar side of the membrane. N-linked (GlcNAc...) asparagine glycosylation is found at Asn46, Asn92, Asn108, and Asn121. Zn(2+) is bound by residues His156 and Asp168. Glu200 (proton acceptor) is an active-site residue. Glu201, Glu226, and His300 together coordinate Zn(2+). The N-linked (GlcNAc...) asparagine glycan is linked to Asn319. Residues His359 to Ala379 form a helical membrane-spanning segment. Topologically, residues His380–Arg391 are cytoplasmic. The helical transmembrane segment at Leu392 to Thr412 threads the bilayer. The Vacuolar portion of the chain corresponds to Lys413–Arg428. Residues Thr429–Ala449 traverse the membrane as a helical segment. Residues Glu450–Tyr458 are Cytoplasmic-facing. Residues Lys459–Leu479 form a helical membrane-spanning segment. Residues Arg480–Thr489 lie on the Vacuolar side of the membrane. Residues Gly490 to Phe510 traverse the membrane as a helical segment. Residues Gly511–Tyr601 lie on the Cytoplasmic side of the membrane. Polar residues-rich tracts occupy residues Asn522–Gln531 and Asn546–His567. Residues Asn522–Val573 are disordered. Residues Asn602–Leu622 form a helical membrane-spanning segment. The Vacuolar segment spans residues Asp623–Gln641. Residues Leu642 to Ile662 form a helical membrane-spanning segment. Residues Ser663–Ser669 are Cytoplasmic-facing. A helical transmembrane segment spans residues Ser670–Phe690. Residues Ser691–Leu947 are Vacuolar-facing. Asn742, Asn784, Asn801, and Asn833 each carry an N-linked (GlcNAc...) asparagine glycan.

It belongs to the peptidase M28 family. Zn(2+) serves as cofactor.

Its subcellular location is the vacuole membrane. Its function is as follows. May be involved in vacuolar sorting and osmoregulation. The chain is Vacuolar membrane protease from Candida glabrata (strain ATCC 2001 / BCRC 20586 / JCM 3761 / NBRC 0622 / NRRL Y-65 / CBS 138) (Yeast).